A 285-amino-acid chain; its full sequence is Mitochondrial substrate carrier family protein S (285 aa).

The Mitochondrial intermembrane portion of the chain corresponds to 1–9; the sequence is MSTERGLKD. Solcar repeat units follow at residues 4 to 87, 96 to 183, and 197 to 283; these read ERGL…MKVL, LTVG…CKRY, and LNLP…VIKL. A helical membrane pass occupies residues 10–30; it reads SIAGTVAGAACLFTGHPFDTI. Residues 31–61 lie on the Mitochondrial matrix side of the membrane; that stretch reads RVRLQTSNTPIGIMECFRNTIKYEGFSGLYK. The chain crosses the membrane as a helical span at residues 62–82; it reads GVTSPLFGMMFETAVLFAGYG. The Mitochondrial intermembrane portion of the chain corresponds to 83 to 101; it reads QMKVLLQKDENTPLTVGQC. A helical transmembrane segment spans residues 102–122; it reads AIAGGFAGVGASVVLTPVELV. Over 123-150 the chain is Mitochondrial matrix; sequence KCRLQVQTTGPQKYKGSLDCLVQILKEG. The helical transmembrane segment at 151–172 threads the bilayer; it reads GIRGAYRGFTPTIAREFVGNMA. Residues 173–199 lie on the Mitochondrial intermembrane side of the membrane; the sequence is FFSTYETCKRYFKNKENKPNDDDELNL. Residues 200–220 form a helical membrane-spanning segment; the sequence is PALIISGGLGGMAYWTVLYPV. The Mitochondrial matrix segment spans residues 221 to 258; that stretch reads DVAKSKIQISEGAGPSPSIVKVLKEIYSKEGVKGLFRG. The helical transmembrane segment at 259–277 threads the bilayer; the sequence is YTPTIIRSFPANAAMFSVY. The Mitochondrial intermembrane segment spans residues 278–285; sequence ELVIKLLG.

This sequence belongs to the mitochondrial carrier (TC 2.A.29) family.

The protein resides in the mitochondrion inner membrane. Mitochondrial solute carriers shuttle metabolites, nucleotides, and cofactors through the mitochondrial inner membrane. Mediates the transport of acylcarnitines of different length across the mitochondrial inner membrane from the cytosol to the mitochondrial matrix for their oxidation by the mitochondrial fatty acid-oxidation pathway. This chain is Mitochondrial substrate carrier family protein S (mcfS), found in Dictyostelium discoideum (Social amoeba).